The sequence spans 304 residues: Protease HtpX homolog (304 aa).

2 consecutive transmembrane segments (helical) span residues Val-14 to Ile-34 and Tyr-39 to Met-59. Position 144 (His-144) interacts with Zn(2+). The active site involves Glu-145. His-148 provides a ligand contact to Zn(2+). 2 helical membrane-spanning segments follow: residues Ile-159 to Phe-179 and Ala-202 to Ile-222. Residue Glu-231 participates in Zn(2+) binding.

Belongs to the peptidase M48B family. Requires Zn(2+) as cofactor.

The protein localises to the cell membrane. The chain is Protease HtpX homolog from Listeria monocytogenes serotype 4a (strain HCC23).